The following is a 262-amino-acid chain: Acyl-[acyl-carrier-protein]--UDP-N-acetylglucosamine O-acyltransferase (262 aa).

This sequence belongs to the transferase hexapeptide repeat family. LpxA subfamily. As to quaternary structure, homotrimer.

It localises to the cytoplasm. The catalysed reaction is a (3R)-hydroxyacyl-[ACP] + UDP-N-acetyl-alpha-D-glucosamine = a UDP-3-O-[(3R)-3-hydroxyacyl]-N-acetyl-alpha-D-glucosamine + holo-[ACP]. Its pathway is glycolipid biosynthesis; lipid IV(A) biosynthesis; lipid IV(A) from (3R)-3-hydroxytetradecanoyl-[acyl-carrier-protein] and UDP-N-acetyl-alpha-D-glucosamine: step 1/6. Involved in the biosynthesis of lipid A, a phosphorylated glycolipid that anchors the lipopolysaccharide to the outer membrane of the cell. The sequence is that of Acyl-[acyl-carrier-protein]--UDP-N-acetylglucosamine O-acyltransferase from Pasteurella multocida (strain Pm70).